A 245-amino-acid chain; its full sequence is Pyridoxine 5'-phosphate synthase (245 aa).

Position 7 (Asn7) interacts with 3-amino-2-oxopropyl phosphate. Residue 9-10 (DH) participates in 1-deoxy-D-xylulose 5-phosphate binding. Residue Arg18 participates in 3-amino-2-oxopropyl phosphate binding. The Proton acceptor role is filled by His43. 1-deoxy-D-xylulose 5-phosphate is bound by residues Arg45 and His50. The Proton acceptor role is filled by Glu70. Thr100 contributes to the 1-deoxy-D-xylulose 5-phosphate binding site. His190 serves as the catalytic Proton donor. Residues Gly191 and 212-213 (GH) each bind 3-amino-2-oxopropyl phosphate.

This sequence belongs to the PNP synthase family. Homooctamer; tetramer of dimers.

The protein resides in the cytoplasm. It catalyses the reaction 3-amino-2-oxopropyl phosphate + 1-deoxy-D-xylulose 5-phosphate = pyridoxine 5'-phosphate + phosphate + 2 H2O + H(+). It participates in cofactor biosynthesis; pyridoxine 5'-phosphate biosynthesis; pyridoxine 5'-phosphate from D-erythrose 4-phosphate: step 5/5. Functionally, catalyzes the complicated ring closure reaction between the two acyclic compounds 1-deoxy-D-xylulose-5-phosphate (DXP) and 3-amino-2-oxopropyl phosphate (1-amino-acetone-3-phosphate or AAP) to form pyridoxine 5'-phosphate (PNP) and inorganic phosphate. The chain is Pyridoxine 5'-phosphate synthase from Prochlorococcus marinus (strain NATL1A).